The sequence spans 324 residues: Phospho-N-acetylmuramoyl-pentapeptide-transferase (324 aa).

Transmembrane regions (helical) follow at residues 5-25 (IIVI…PLFI), 52-72 (PTMG…WVTA), 76-96 (VLSA…VLGF), 117-137 (FIGQ…SGFS), 147-167 (WSFD…VGGS), 176-196 (LDGL…VLAW), 203-223 (VAVF…FNAH), 227-247 (VFMG…VAVL), 250-270 (LELL…SVII), and 302-322 (IVVT…YIEV).

Belongs to the glycosyltransferase 4 family. MraY subfamily. The cofactor is Mg(2+).

Its subcellular location is the cell membrane. The catalysed reaction is UDP-N-acetyl-alpha-D-muramoyl-L-alanyl-gamma-D-glutamyl-meso-2,6-diaminopimeloyl-D-alanyl-D-alanine + di-trans,octa-cis-undecaprenyl phosphate = di-trans,octa-cis-undecaprenyl diphospho-N-acetyl-alpha-D-muramoyl-L-alanyl-D-glutamyl-meso-2,6-diaminopimeloyl-D-alanyl-D-alanine + UMP. It functions in the pathway cell wall biogenesis; peptidoglycan biosynthesis. Its function is as follows. Catalyzes the initial step of the lipid cycle reactions in the biosynthesis of the cell wall peptidoglycan: transfers peptidoglycan precursor phospho-MurNAc-pentapeptide from UDP-MurNAc-pentapeptide onto the lipid carrier undecaprenyl phosphate, yielding undecaprenyl-pyrophosphoryl-MurNAc-pentapeptide, known as lipid I. This is Phospho-N-acetylmuramoyl-pentapeptide-transferase from Geobacillus thermodenitrificans (strain NG80-2).